We begin with the raw amino-acid sequence, 174 residues long: Inactive signal peptidase IA (174 aa).

Topologically, residues 1–7 are cytoplasmic; the sequence is MKKVVKY. A helical transmembrane segment spans residues 8–28; the sequence is LISLILAIIIVLFVQTFVIVG. Over 29-174 the chain is Extracellular; sequence HVIPNNDMSP…FSKWTIQFKS (146 aa).

This sequence belongs to the peptidase S26 family.

The protein localises to the cell membrane. Functionally, catalytically inactive. The polypeptide is Inactive signal peptidase IA (spsA) (Staphylococcus aureus (strain Mu50 / ATCC 700699)).